We begin with the raw amino-acid sequence, 426 residues long: Serine--tRNA ligase (426 aa).

Residue 231–233 (TSE) coordinates L-serine. 262–264 (RSE) serves as a coordination point for ATP. Glutamate 285 contributes to the L-serine binding site. ATP is bound at residue 349 to 352 (EISS). An L-serine-binding site is contributed by serine 385.

Belongs to the class-II aminoacyl-tRNA synthetase family. Type-1 seryl-tRNA synthetase subfamily. Homodimer. The tRNA molecule binds across the dimer.

It localises to the cytoplasm. The enzyme catalyses tRNA(Ser) + L-serine + ATP = L-seryl-tRNA(Ser) + AMP + diphosphate + H(+). It carries out the reaction tRNA(Sec) + L-serine + ATP = L-seryl-tRNA(Sec) + AMP + diphosphate + H(+). It participates in aminoacyl-tRNA biosynthesis; selenocysteinyl-tRNA(Sec) biosynthesis; L-seryl-tRNA(Sec) from L-serine and tRNA(Sec): step 1/1. Its function is as follows. Catalyzes the attachment of serine to tRNA(Ser). Is also able to aminoacylate tRNA(Sec) with serine, to form the misacylated tRNA L-seryl-tRNA(Sec), which will be further converted into selenocysteinyl-tRNA(Sec). The sequence is that of Serine--tRNA ligase from Legionella pneumophila (strain Lens).